A 715-amino-acid chain; its full sequence is Glycine--tRNA ligase beta subunit (715 aa).

It belongs to the class-II aminoacyl-tRNA synthetase family. Tetramer of two alpha and two beta subunits.

It localises to the cytoplasm. It carries out the reaction tRNA(Gly) + glycine + ATP = glycyl-tRNA(Gly) + AMP + diphosphate. This is Glycine--tRNA ligase beta subunit from Nitrosomonas europaea (strain ATCC 19718 / CIP 103999 / KCTC 2705 / NBRC 14298).